Consider the following 115-residue polypeptide: Hydrogenase maturation factor HypA (115 aa).

His-2 lines the Ni(2+) pocket. Positions 73, 76, 89, and 92 each coordinate Zn(2+).

Belongs to the HypA/HybF family.

Its function is as follows. Involved in the maturation of [NiFe] hydrogenases. Required for nickel insertion into the metal center of the hydrogenase. The sequence is that of Hydrogenase maturation factor HypA from Nitrosospira multiformis (strain ATCC 25196 / NCIMB 11849 / C 71).